The primary structure comprises 118 residues: Large ribosomal subunit protein uL18 (118 aa).

This sequence belongs to the universal ribosomal protein uL18 family. In terms of assembly, part of the 50S ribosomal subunit; part of the 5S rRNA/L5/L18/L25 subcomplex. Contacts the 5S and 23S rRNAs.

Functionally, this is one of the proteins that bind and probably mediate the attachment of the 5S RNA into the large ribosomal subunit, where it forms part of the central protuberance. The protein is Large ribosomal subunit protein uL18 of Levilactobacillus brevis (strain ATCC 367 / BCRC 12310 / CIP 105137 / JCM 1170 / LMG 11437 / NCIMB 947 / NCTC 947) (Lactobacillus brevis).